The primary structure comprises 121 residues: Large ribosomal subunit protein bL12 (121 aa).

The protein belongs to the bacterial ribosomal protein bL12 family. Homodimer. Part of the ribosomal stalk of the 50S ribosomal subunit. Forms a multimeric L10(L12)X complex, where L10 forms an elongated spine to which 2 to 4 L12 dimers bind in a sequential fashion. Binds GTP-bound translation factors.

Forms part of the ribosomal stalk which helps the ribosome interact with GTP-bound translation factors. Is thus essential for accurate translation. The sequence is that of Large ribosomal subunit protein bL12 from Escherichia coli O45:K1 (strain S88 / ExPEC).